The sequence spans 472 residues: Kynureninase 2 (472 aa).

Residues L133, T134, 162 to 165 (FPSD), D247, H250, and Y272 contribute to the pyridoxal 5'-phosphate site. K273 is subject to N6-(pyridoxal phosphate)lysine. Pyridoxal 5'-phosphate contacts are provided by W314 and N342.

It belongs to the kynureninase family. Homodimer. It depends on pyridoxal 5'-phosphate as a cofactor.

The protein localises to the cytoplasm. The catalysed reaction is L-kynurenine + H2O = anthranilate + L-alanine + H(+). It catalyses the reaction 3-hydroxy-L-kynurenine + H2O = 3-hydroxyanthranilate + L-alanine + H(+). Its pathway is amino-acid degradation; L-kynurenine degradation; L-alanine and anthranilate from L-kynurenine: step 1/1. The protein operates within cofactor biosynthesis; NAD(+) biosynthesis; quinolinate from L-kynurenine: step 2/3. Catalyzes the cleavage of L-kynurenine (L-Kyn) and L-3-hydroxykynurenine (L-3OHKyn) into anthranilic acid (AA) and 3-hydroxyanthranilic acid (3-OHAA), respectively. The chain is Kynureninase 2 (kyn-2) from Neurospora crassa (strain ATCC 24698 / 74-OR23-1A / CBS 708.71 / DSM 1257 / FGSC 987).